The chain runs to 518 residues: MEFLMDPSIWAGLLTLVVLEIVLGIDNLVFIAILADKLPPKQRDKARLLGLSLALIMRLGLLSLISWMVTLTKPLFTVMDFSFSGRDLIMLFGGIFLLFKATTELHERLENRDHDSGHGKGYASFWVVVTQIVILDAVFSLDAVITAVGMVNHLPVMMAAVVIAMAVMLLASKPLTRFVNQHPTVVVLCLSFLLMIGLSLVAEGFGFHIPKGYLYAAIGFSIIIEVFNQIARRNFIRHQSTLPLRARTADAILRLMGGKRQANVQHDADNPMPMPIPEGAFAEEERYMINGVLTLASRSLRGIMTPRGEISWVDANLGVDEIREQLLSSPHSLFPVCRGELDEIIGIVRAKELLVALEEGVDVAAIASASPAIIVPETLDPINLLGVLRRARGSFVIVTNEFGVVQGLVTPLDVLEAIAGEFPDADETPEIITDGDGWLVKGGTDLHALQQALDVEHLADDDDIATVAGLVISANGHIPRVGDVIDVGPLHITIIEANDYRVDLVRIVKEQPAHDEDE.

Topologically, residues 1–13 are cytoplasmic; it reads MEFLMDPSIWAGL. A helical transmembrane segment spans residues 14-34; that stretch reads LTLVVLEIVLGIDNLVFIAIL. Residues 35–48 lie on the Periplasmic side of the membrane; that stretch reads ADKLPPKQRDKARL. Residues 49 to 69 traverse the membrane as a helical segment; sequence LGLSLALIMRLGLLSLISWMV. Residues 70 to 78 are Cytoplasmic-facing; it reads TLTKPLFTV. A helical membrane pass occupies residues 79–99; the sequence is MDFSFSGRDLIMLFGGIFLLF. Residues 100–124 lie on the Periplasmic side of the membrane; the sequence is KATTELHERLENRDHDSGHGKGYAS. The chain crosses the membrane as a helical span at residues 125–145; that stretch reads FWVVVTQIVILDAVFSLDAVI. Residues 146 to 149 lie on the Cytoplasmic side of the membrane; sequence TAVG. Residues 150–170 form a helical membrane-spanning segment; it reads MVNHLPVMMAAVVIAMAVMLL. The Periplasmic segment spans residues 171–184; the sequence is ASKPLTRFVNQHPT. Residues 185–205 traverse the membrane as a helical segment; it reads VVVLCLSFLLMIGLSLVAEGF. A topological domain (cytoplasmic) is located at residue Gly-206. Residues 207-227 traverse the membrane as a helical segment; the sequence is FHIPKGYLYAAIGFSIIIEVF. Residues 228-354 lie on the Periplasmic side of the membrane; it reads NQIARRNFIR…IGIVRAKELL (127 aa). 2 consecutive CBS domains span residues 304–363 and 367–427; these read MTPR…GVDV and ASAS…DADE. A helical transmembrane segment spans residues 355 to 375; sequence VALEEGVDVAAIASASPAIIV. Residues 376–518 are Cytoplasmic-facing; sequence PETLDPINLL…KEQPAHDEDE (143 aa).

Belongs to the UPF0053 family.

The protein resides in the cell inner membrane. In Escherichia coli O157:H7, this protein is UPF0053 inner membrane protein YoaE (yoaE).